We begin with the raw amino-acid sequence, 210 residues long: Thymidylate kinase (210 aa).

11–18 (GLEGAGKS) is a binding site for ATP.

This sequence belongs to the thymidylate kinase family.

It carries out the reaction dTMP + ATP = dTDP + ADP. Functionally, phosphorylation of dTMP to form dTDP in both de novo and salvage pathways of dTTP synthesis. This is Thymidylate kinase from Vibrio campbellii (strain ATCC BAA-1116).